The following is a 392-amino-acid chain: PMA1 stabilization in the Golgi protein 1 (392 aa).

The signal sequence occupies residues 1 to 22 (MRFHDSILIFFSLASLYQHVHG). O-linked (Man) threonine glycans are attached at residues T34 and T35. An O-linked (Man) serine glycan is attached at S36. O-linked (Man) threonine glycosylation occurs at T45. An O-linked (Man) serine glycan is attached at S49. O-linked (Man) threonine glycosylation is found at T55, T57, and T63. An O-linked (Man) serine glycan is attached at S65. O-linked (Man) threonine glycosylation occurs at T71. S80 carries O-linked (Man) serine glycosylation. 2 O-linked (Man) threonine glycosylation sites follow: T89 and T99. S107 carries an O-linked (Man) serine glycan. 2 O-linked (Man) threonine glycosylation sites follow: T108 and T112. Residues S114 and S115 are each glycosylated (O-linked (Man) serine). T117 carries O-linked (Man) threonine glycosylation. 2 O-linked (Man) serine glycosylation sites follow: S119 and S148. O-linked (Man) threonine glycosylation occurs at T156. Residue S171 is glycosylated (O-linked (Man) serine). O-linked (Man) threonine glycosylation is present at T176. S181 carries O-linked (Man) serine glycosylation. O-linked (Man) threonine glycans are attached at residues T188, T192, T195, and T199. O-linked (Man) serine glycans are attached at residues S203 and S215. The Lumenal segment spans residues 230–317 (DIPATFFSSE…DAGITNDQWY (88 aa)). A helical membrane pass occupies residues 318-338 (YVALSIPTVVVVFFVFMYFFL). Residues 339–392 (YVNGKNRDFTDVTRKALNKKRRVLGKFSEMKKFKNMKNHKYTELPSYKKTSKQN) lie on the Cytoplasmic side of the membrane.

In terms of assembly, interacts with EXP1. PSG1-N' interacts with ERAD-related proteins involved in PMA1 quality control including EPS1, CDC48, UBX2 and SSM4. PSG1-C' interacts with the TLG1/2 SNARE complex proteins TLG1, TLG2 and VTI1. Post-translationally, the precursor protein is cleaved into two polypeptide chains, PSG1-N' and PSG1-C'. The cleavage is performed in the Golgi apparatus by Ca(+)-dependent serine protease KEX2 between Arg-229 and Asp-230. PSG1-N' is highly O-mannosylated.

It localises to the golgi apparatus lumen. It is found in the cytoplasmic vesicle. Its subcellular location is the COPI-coated vesicle membrane. With EXP1, the specific cargo receptor protein for the plasma membrane ATPase PMA1, is involved in the transport and/or maturation of PMA1. EXP1 and PSG1 probably act sequentially to promote PMA1 sorting between the ER and the Golgi, with EXP1 promoting PMA1 export from the ER to the Golgi while PSG1 has a role in PMA1 maturation or quality control in the Golgi. PSG1 might also couple PMA1 sorting and maturation in the early secretory pathway with the glycosylation machinery. Its function is as follows. PSG1 is cleaved by KEX2 in two stable peptides, PSG1-N' and PSG1-C', the former supporting a role in maturation quality control, the latter having a role in modulating vesicular trafficking. The polypeptide is PMA1 stabilization in the Golgi protein 1 (Saccharomyces cerevisiae (strain ATCC 204508 / S288c) (Baker's yeast)).